We begin with the raw amino-acid sequence, 622 residues long: Mitochondrial distribution and morphology protein 34 (622 aa).

An SMP-LTD domain is found at 1–195 (MAFNFNWSPL…LPAIIHRLSL (195 aa)). Disordered stretches follow at residues 211 to 234 (QVTN…DPVD), 303 to 322 (PSGL…SHVA), 355 to 432 (SMGA…IRQP), 445 to 464 (ERNA…PASR), 482 to 546 (SLQQ…QTHL), and 581 to 622 (KMGG…AYRH). Positions 214–225 (NPPLEGPGLDPL) are enriched in low complexity. Over residues 360 to 372 (RHSKAHARKRKKR) the composition is skewed to basic residues. Positions 373–384 (VVDLRRRPKNTD) are enriched in basic and acidic residues. The segment covering 388–404 (SVSGESEFTESTSAASV) has biased composition (low complexity). Composition is skewed to polar residues over residues 482–495 (SLQQ…SKSL) and 522–532 (NASNYTSSGDS). 2 stretches are compositionally biased toward low complexity: residues 533–543 (QQQQQQQQQHQ) and 592–601 (NNKNDNKNNN).

This sequence belongs to the MDM34 family. As to quaternary structure, component of the ER-mitochondria encounter structure (ERMES) or MDM complex, composed of MMM1, MDM10, MDM12 and MDM34.

It localises to the mitochondrion outer membrane. Its function is as follows. Component of the ERMES/MDM complex, which serves as a molecular tether to connect the endoplasmic reticulum (ER) and mitochondria. Components of this complex are involved in the control of mitochondrial shape and protein biogenesis, and function in nonvesicular lipid trafficking between the ER and mitochondria. MDM34 is required for the interaction of the ER-resident membrane protein MMM1 and the outer mitochondrial membrane-resident beta-barrel protein MDM10. The sequence is that of Mitochondrial distribution and morphology protein 34 from Ajellomyces capsulatus (strain G186AR / H82 / ATCC MYA-2454 / RMSCC 2432) (Darling's disease fungus).